We begin with the raw amino-acid sequence, 269 residues long: uncharacterized protein (269 aa).

The span at Gln-181–Ala-191 shows a compositional bias: basic and acidic residues. The tract at residues Gln-181–Gly-203 is disordered. Over residues Ser-193 to Met-202 the composition is skewed to polar residues. Ser-200 carries the phosphoserine modification.

This is an uncharacterized protein from Schizosaccharomyces pombe (strain 972 / ATCC 24843) (Fission yeast).